The following is a 104-amino-acid chain: Small ribosomal subunit protein bS18 (104 aa).

The span at 1 to 14 shows a compositional bias: basic and acidic residues; that stretch reads MMNNEHDNFQKEVE. The tract at residues 1 to 25 is disordered; sequence MMNNEHDNFQKEVETTTETTFNREE.

Belongs to the bacterial ribosomal protein bS18 family. As to quaternary structure, part of the 30S ribosomal subunit. Forms a tight heterodimer with protein bS6.

In terms of biological role, binds as a heterodimer with protein bS6 to the central domain of the 16S rRNA, where it helps stabilize the platform of the 30S subunit. The protein is Small ribosomal subunit protein bS18 of Mycoplasma pneumoniae (strain ATCC 29342 / M129 / Subtype 1) (Mycoplasmoides pneumoniae).